We begin with the raw amino-acid sequence, 507 residues long: Cobyric acid synthase (507 aa).

The 198-residue stretch at Asp-251–Phe-448 folds into the GATase cobBQ-type domain. Catalysis depends on Cys-332, which acts as the Nucleophile. The active site involves His-440.

Belongs to the CobB/CobQ family. CobQ subfamily.

It participates in cofactor biosynthesis; adenosylcobalamin biosynthesis. Its function is as follows. Catalyzes amidations at positions B, D, E, and G on adenosylcobyrinic A,C-diamide. NH(2) groups are provided by glutamine, and one molecule of ATP is hydrogenolyzed for each amidation. The protein is Cobyric acid synthase of Klebsiella pneumoniae subsp. pneumoniae (strain ATCC 700721 / MGH 78578).